Reading from the N-terminus, the 436-residue chain is Chromosomal replication initiator protein DnaA (436 aa).

Residues 1–80 (MSHEAVWQHV…QAPRFELRVV (80 aa)) are domain I, interacts with DnaA modulators. A domain II region spans residues 80 to 100 (VPGVVVQEDIFQAAPAEAPRP). Positions 101–317 (KLNPKYTFEN…GALMRAIAFA (217 aa)) are domain III, AAA+ region. Residues glycine 145, glycine 147, lysine 148, and threonine 149 each contribute to the ATP site. A domain IV, binds dsDNA region spans residues 318 to 436 (SLNGVELTRA…LLRTLREACT (119 aa)).

This sequence belongs to the DnaA family. In terms of assembly, oligomerizes as a right-handed, spiral filament on DNA at oriC.

The protein resides in the cytoplasm. Plays an essential role in the initiation and regulation of chromosomal replication. ATP-DnaA binds to the origin of replication (oriC) to initiate formation of the DNA replication initiation complex once per cell cycle. Binds the DnaA box (a 9 base pair repeat at the origin) and separates the double-stranded (ds)DNA. Forms a right-handed helical filament on oriC DNA; dsDNA binds to the exterior of the filament while single-stranded (ss)DNA is stabiized in the filament's interior. The ATP-DnaA-oriC complex binds and stabilizes one strand of the AT-rich DNA unwinding element (DUE), permitting loading of DNA polymerase. After initiation quickly degrades to an ADP-DnaA complex that is not apt for DNA replication. Binds acidic phospholipids. The chain is Chromosomal replication initiator protein DnaA from Thermus thermophilus (strain ATCC BAA-163 / DSM 7039 / HB27).